A 914-amino-acid chain; its full sequence is PHD finger protein 14 (914 aa).

A disordered region spans residues 19–276 (DALDYDSSDD…EDSLLERPQT (258 aa)). The span at 53-68 (ESAAGSESDSDAAAAS) shows a compositional bias: low complexity. Over residues 90 to 102 (EKVKESFSEETSS) the composition is skewed to basic and acidic residues. 2 stretches are compositionally biased toward acidic residues: residues 155–168 (ELNEMDDYDSEDDN) and 191–233 (GEED…DSEE). A PHD-type 1 zinc finger spans residues 285 to 346 (ILICCVCLGD…PWFCDACKNG (62 aa)). The Zn(2+) site is built by Cys-288, Cys-291, Cys-305, Cys-308, His-313, Cys-316, Cys-340, Cys-343, Cys-351, Cys-354, His-371, Cys-374, Cys-407, Cys-410, Cys-424, Cys-429, His-434, Cys-437, Cys-461, and His-464. Residues 348–381 (SPSCELCPSQDGIFKETDAGRWVHVVCALYVPGV) form a C2HC pre-PHD-type zinc finger. Residues 405-465 (KECSLCEDTR…PFFAYCKQHA (61 aa)) form a PHD-type 2 zinc finger. Positions 596-644 (MIQIQDNIVEQKNLKDKLESEQEKLHMEYDKLCESLEDLQNVNGQLRTE) form a coiled coil. Residues 692 to 746 (LYSCGICKKNQDQHLLLLCDTCKLHYHLGCLDPPLTRMPKKTKNSYWQCSECDQA) form a PHD-type 3 zinc finger. Cys-695, Cys-698, Cys-710, Cys-713, His-718, Cys-721, Cys-740, and Cys-743 together coordinate Zn(2+). Residues 777–838 (PQEMSPEPKK…PKADDTRTEC (62 aa)) are disordered. Basic residues predominate over residues 792 to 802 (TRTRGQKRKRM). Residues 803–817 (SICEEEKMEEPLPRE) are compositionally biased toward basic and acidic residues. The PHD-type 4 zinc-finger motif lies at 835–888 (RTECTTCKGPGDNENLVRCDECRLCYHFGCLDPPLKKSPKQTGYGWICQECDTS). 8 residues coordinate Zn(2+): Cys-838, Cys-841, Cys-853, Cys-856, His-861, Cys-864, Cys-882, and Cys-885. Residues 887–914 (TSSSKEEEAQEVEEESVNEETAEQEIPD) form a disordered region. Residues 894–914 (EAQEVEEESVNEETAEQEIPD) are compositionally biased toward acidic residues.

Interacts with histone H3.

It localises to the nucleus. Functionally, histone-binding protein. Binds preferentially to unmodified histone H3 but can also bind to a lesser extent to histone H3 trimethylated at 'Lys-9' (H3K9me3) as well as to histone H3 monomethylated at 'Lys-27' (H3K27ac) and trimethylated at 'Lys-27' (H3K27me3). Represses PDGFRA expression, thus playing a role in regulation of mesenchymal cell proliferation. The chain is PHD finger protein 14 from Danio rerio (Zebrafish).